Reading from the N-terminus, the 197-residue chain is FMN-dependent NADH:quinone oxidoreductase 1 (197 aa).

FMN contacts are provided by residues Ser-10, 16–18 (SQS), 93–96 (MYNF), and 137–140 (TRGG).

The protein belongs to the azoreductase type 1 family. Homodimer. FMN serves as cofactor.

It catalyses the reaction 2 a quinone + NADH + H(+) = 2 a 1,4-benzosemiquinone + NAD(+). The enzyme catalyses N,N-dimethyl-1,4-phenylenediamine + anthranilate + 2 NAD(+) = 2-(4-dimethylaminophenyl)diazenylbenzoate + 2 NADH + 2 H(+). Functionally, quinone reductase that provides resistance to thiol-specific stress caused by electrophilic quinones. In terms of biological role, also exhibits azoreductase activity. Catalyzes the reductive cleavage of the azo bond in aromatic azo compounds to the corresponding amines. This is FMN-dependent NADH:quinone oxidoreductase 1 from Photobacterium profundum (strain SS9).